A 97-amino-acid polypeptide reads, in one-letter code: Large ribosomal subunit protein uL23 (97 aa).

It belongs to the universal ribosomal protein uL23 family. In terms of assembly, part of the 50S ribosomal subunit. Contacts protein L29, and trigger factor when it is bound to the ribosome.

In terms of biological role, one of the early assembly proteins it binds 23S rRNA. One of the proteins that surrounds the polypeptide exit tunnel on the outside of the ribosome. Forms the main docking site for trigger factor binding to the ribosome. The sequence is that of Large ribosomal subunit protein uL23 from Lactococcus lactis subsp. cremoris (strain SK11).